The sequence spans 192 residues: Lipid A acyltransferase PagP (192 aa).

Residues 1–24 (MWLRFCAPALMAWYWVFFPSTSQA) form the signal peptide. Catalysis depends on residues His63, Asp106, and Ser107.

Belongs to the lipid A palmitoyltransferase family. In terms of assembly, homodimer.

It localises to the cell outer membrane. The enzyme catalyses a lipid A + a 1,2-diacyl-sn-glycero-3-phosphocholine = a hepta-acyl lipid A + a 2-acyl-sn-glycero-3-phosphocholine. The catalysed reaction is a lipid IVA + a 1,2-diacyl-sn-glycero-3-phosphocholine = a lipid IVB + a 2-acyl-sn-glycero-3-phosphocholine. It catalyses the reaction a lipid IIA + a 1,2-diacyl-sn-glycero-3-phosphocholine = a lipid IIB + a 2-acyl-sn-glycero-3-phosphocholine. Transfers a fatty acid residue from the sn-1 position of a phospholipid to the N-linked hydroxyfatty acid chain on the proximal unit of lipid A or its precursors. The protein is Lipid A acyltransferase PagP of Musicola paradisiaca (strain Ech703) (Dickeya paradisiaca).